The sequence spans 220 residues: Adapter protein MecA (220 aa).

It belongs to the MecA family. Homodimer.

Enables the recognition and targeting of unfolded and aggregated proteins to the ClpC protease or to other proteins involved in proteolysis. This chain is Adapter protein MecA, found in Macrococcus caseolyticus (strain JCSC5402) (Macrococcoides caseolyticum).